We begin with the raw amino-acid sequence, 397 residues long: Gastric triacylglycerol lipase (397 aa).

Residues 1–19 (MWWLLVTVCFIHMSGNAFC) form the signal peptide. Residue Asn33 is glycosylated (N-linked (GlcNAc...) asparagine). Positions 77 to 376 (PVVFLQHGLL…PNYNHLDFIW (300 aa)) constitute an AB hydrolase-1 domain. The Nucleophile role is filled by Ser171. A disulfide bridge links Cys245 with Cys254. Asn270 and Asn326 each carry an N-linked (GlcNAc...) asparagine glycan. Catalysis depends on charge relay system residues Asp342 and His371.

The protein belongs to the AB hydrolase superfamily. Lipase family.

It localises to the secreted. It catalyses the reaction a triacylglycerol + H2O = a diacylglycerol + a fatty acid + H(+). It carries out the reaction 1,2,3-tri-(9Z-octadecenoyl)-glycerol + H2O = 1,2-di-(9Z-octadecenoyl)-sn-glycerol + (9Z)-octadecenoate + H(+). The catalysed reaction is 1,2,3-trioctanoylglycerol + H2O = 1,2-dioctanoyl-sn-glycerol + octanoate + H(+). Inhibited by diethylp-nitrophenyl phosphate but not inhibited by thiol reagents 5,5'-dithiobis(2-nitrobenzoic acid) or 4,4'-dithiopyridine. Functionally, catalyzes the hydrolysis of triacylglycerols to yield free fatty acids, diacylglycerol, monoacylglycerol, and glycerol. Shows a preferential hydrolysis at the sn-3 position of triacylglycerol. The protein is Gastric triacylglycerol lipase (LIPF) of Bos taurus (Bovine).